The chain runs to 338 residues: MNKFKNIAVYGGGSFGTSLASLAAQNCNNVTLFLRDEAIAKEILHNKTNVKYLGDIKLPAHLQATTNLDIIKDFELIIIAVPSYAFDDSIKLLKTHSISKDNTLLIATKGFARNPTTLFSDRLKTLLPHSPTAFFVGPNLAKELAKNLPASASIASLDIDIANKIAYNLSSKIFTTNVSSDIVTLQVAGALKNIFAIKSGIDLARKQGENARATLIVAALKEIAILSKALGGMQKNSDILLEGVVGDLVLTCYSLGSRNTKFGYELGISSDKKQFLQEYKELVEGREALKLVLDLIKKYNLHMPIISEVASCVIPYVIPAKAGMTYESTQQCLRRNDI.

Ser-14, Phe-15, Arg-35, and Lys-109 together coordinate NADPH. Lys-109 and Gly-137 together coordinate sn-glycerol 3-phosphate. An NADPH-binding site is contributed by Ala-141. Residues Lys-192, Asp-247, Ser-257, Arg-258, and Asn-259 each contribute to the sn-glycerol 3-phosphate site. Lys-192 (proton acceptor) is an active-site residue. Arg-258 is a binding site for NADPH. NADPH-binding residues include Leu-282 and Glu-284.

The protein belongs to the NAD-dependent glycerol-3-phosphate dehydrogenase family.

It is found in the cytoplasm. It catalyses the reaction sn-glycerol 3-phosphate + NAD(+) = dihydroxyacetone phosphate + NADH + H(+). The enzyme catalyses sn-glycerol 3-phosphate + NADP(+) = dihydroxyacetone phosphate + NADPH + H(+). It functions in the pathway membrane lipid metabolism; glycerophospholipid metabolism. Its function is as follows. Catalyzes the reduction of the glycolytic intermediate dihydroxyacetone phosphate (DHAP) to sn-glycerol 3-phosphate (G3P), the key precursor for phospholipid synthesis. In Rickettsia rickettsii (strain Iowa), this protein is Glycerol-3-phosphate dehydrogenase [NAD(P)+].